A 271-amino-acid chain; its full sequence is Acetyl-coenzyme A carboxylase carboxyl transferase subunit alpha (271 aa).

Residues 1-247 (MSRELIRTAD…KKTILEALGE (247 aa)) enclose the CoA carboxyltransferase C-terminal domain.

It belongs to the AccA family. As to quaternary structure, acetyl-CoA carboxylase is a heterohexamer composed of biotin carboxyl carrier protein (AccB), biotin carboxylase (AccC) and two subunits each of ACCase subunit alpha (AccA) and ACCase subunit beta (AccD).

Its subcellular location is the cytoplasm. It carries out the reaction N(6)-carboxybiotinyl-L-lysyl-[protein] + acetyl-CoA = N(6)-biotinyl-L-lysyl-[protein] + malonyl-CoA. It functions in the pathway lipid metabolism; malonyl-CoA biosynthesis; malonyl-CoA from acetyl-CoA: step 1/1. Functionally, component of the acetyl coenzyme A carboxylase (ACC) complex. First, biotin carboxylase catalyzes the carboxylation of biotin on its carrier protein (BCCP) and then the CO(2) group is transferred by the carboxyltransferase to acetyl-CoA to form malonyl-CoA. The chain is Acetyl-coenzyme A carboxylase carboxyl transferase subunit alpha from Clostridium perfringens (strain ATCC 13124 / DSM 756 / JCM 1290 / NCIMB 6125 / NCTC 8237 / Type A).